A 222-amino-acid polypeptide reads, in one-letter code: Kinetochore protein Spc25 (222 aa).

A coiled-coil region spans residues 51–100 (RHQRKVGKLQKVIMERREELDKRVSFIEELDRELEATKLRSLAMKDRIKQ).

It belongs to the SPC25 family. In terms of assembly, component of the Ndc80 complex, which is composed of Ndc80, Nuf2 and Spc25.

It is found in the nucleus. Its subcellular location is the chromosome. The protein resides in the centromere. The protein localises to the kinetochore. Functionally, acts as a component of the essential kinetochore-associated Ndc80 complex, which is required for chromosome segregation and spindle checkpoint activity during meiosis and mitosis. Required for kinetochore integrity and the organization of stable microtubule binding sites in the outer plate of the kinetochore. Participates in SAC signaling that responds specifically to disruptions in spindle microtubule dynamics. The NDC80 complex synergistically enhances the affinity of the SKA1 complex for microtubules and may allow the NDC80 complex to track depolymerizing microtubules. This is Kinetochore protein Spc25 from Drosophila sechellia (Fruit fly).